A 787-amino-acid chain; its full sequence is Signal transducer and activator of transcription 5B (787 aa).

Phosphotyrosine is present on Tyr90. Phosphoserine occurs at positions 128 and 193. The required for interaction with NMI stretch occupies residues 232–321 (KHQKTLQLLR…MLAEVNATIT (90 aa)). Positions 589-686 (WNDGAILGFV…EVYSKYYTPV (98 aa)) constitute an SH2 domain. Tyr682 carries the phosphotyrosine modification. Tyr699 bears the Phosphotyrosine; by HCK, JAK and PTK6 mark.

This sequence belongs to the transcription factor STAT family. As to quaternary structure, upon activation, forms homodimers. Forms also heterodimers with related family members. Binds NR3C1. Interacts with NCOA1. Interacts with NMI. Interacts with SOCS7. Interacts (via SH2 domain) with INSR. Interacts with CPEB3; this inhibits STAT5B-mediated transcriptional activation. In terms of processing, tyrosine phosphorylated in response to signaling via activated KIT, resulting in translocation to the nucleus. Tyrosine phosphorylated in response to signaling via activated FLT3; wild-type FLT3 results in much weaker phosphorylation than constitutively activated mutant FLT3. Alternatively, can be phosphorylated by JAK2. Phosphorylation at Tyr-699 by PTK6 or HCK leads to an increase of its transcriptional activity.

The protein localises to the cytoplasm. The protein resides in the nucleus. Its function is as follows. Carries out a dual function: signal transduction and activation of transcription. Mediates cellular responses to the cytokine KITLG/SCF and other growth factors. Binds to the GAS element and activates PRL-induced transcription. Positively regulates hematopoietic/erythroid differentiation. The chain is Signal transducer and activator of transcription 5B (STAT5B) from Homo sapiens (Human).